Here is a 640-residue protein sequence, read N- to C-terminus: Cytochrome P450 monooxygenase cyp1 (640 aa).

A glycan (N-linked (GlcNAc...) asparagine) is linked at asparagine 71. The helical transmembrane segment at 120–139 threads the bilayer; it reads LLVFLVGLFLGTIYLLYRYW. Asparagine 350 is a glycosylation site (N-linked (GlcNAc...) asparagine). A heme-binding site is contributed by cysteine 572.

It belongs to the cytochrome P450 family. It depends on heme as a cofactor.

It is found in the membrane. It functions in the pathway secondary metabolite biosynthesis. Its function is as follows. Cytochrome P450 monooxygenase; part of the gene cluster that mediates the biosynthesis of the glycolipid biosurfactant ustilagic acid (UA). UA is a secreted cellobiose glycolipid that is toxic for many microorganisms and confers biocontrol activity to U.maydis. UA consists of 15,16-dihydroxypalmitic or 2,15,16-trihydroxypalmitic acid, which is O-glycosidically linked to cellobiose at its terminal hydroxyl group. In addition, the cellobiose moiety is acetylated and acylated with a short-chain hydroxy fatty acid. UA biosynthesis starts with omega-hydroxylation of palmitic acid catalyzed by the cytochrome P450 monooxygenase cyp1. Terminal hydroxylation of palmitic acid precedes subterminal hydroxylation catalyzed by the cytochrome P450 monooxygenase cyp2. Sequential glucosylation of the hydroxy fatty acid is probably catalyzed by the glycosyltransferase ugt1. The cellobiose lipid is further decorated by acetylation of the proximal glucose residue and by acylation with a short-chain beta-hydroxy fatty acid at the distal glucose residue. The acyltransferase uat1 may be a good candidate for catalyzing either acetylation or acylation of the cellobiose lipid. The fatty acid synthase fas2 may be involved in synthesis of the carbon backbone of the short-chain beta-hydroxy fatty acid esterified to the cellobiose disaccharide. The secreted UA consists of a mixture of both alpha-hydroxylated and non-hydroxylated glycolipids; therefore, alpha-hydroxylation of the long-chain fatty, catalyzed by the fatty acid hydroxylase ahd1, occurs late in UA biosynthesis and may be the last step before secretion. The sequence is that of Cytochrome P450 monooxygenase cyp1 from Mycosarcoma maydis (Corn smut fungus).